Consider the following 415-residue polypeptide: MSEVIEKAKRAKQASFKMALSTTDDKNEALQLISQAIINHKQEILTANALDIEEGKKKGLSEAVIDRIRLNEERLQDIADAILQVTILTDPIGEALEIIEKDNGLFITKKRVPIGVIGMVYEARPNVTVDAASLAIKTGNSVVLRGSSSAIESNKALIQVIHQSLASSSIPKEAVQLIEDTRREVANQFFQLNEYLDVLIPRGGKQLIDTVIKQSTVPVIETGAGNCHVYLDESAKVEMATEIVLNAKLQRPSVCNAIESLIIHRQWFEDHGLELLKTMQSHDIKIHGDSVVMEKFPPAIKAVERDWEKEYLSSEISVKIVDSVSEAIDHINRYGTRHSEAIITENKMNAEQFQLQVDAAAVYHNASTRFTDGFEFGYGAEIGISTQKLHARGPMGLEALTSTKFVISGSGQIRE.

Belongs to the gamma-glutamyl phosphate reductase family.

It is found in the cytoplasm. It carries out the reaction L-glutamate 5-semialdehyde + phosphate + NADP(+) = L-glutamyl 5-phosphate + NADPH + H(+). Its pathway is amino-acid biosynthesis; L-proline biosynthesis; L-glutamate 5-semialdehyde from L-glutamate: step 2/2. Functionally, catalyzes the NADPH-dependent reduction of L-glutamate 5-phosphate into L-glutamate 5-semialdehyde and phosphate. The product spontaneously undergoes cyclization to form 1-pyrroline-5-carboxylate. The polypeptide is Gamma-glutamyl phosphate reductase (Oceanobacillus iheyensis (strain DSM 14371 / CIP 107618 / JCM 11309 / KCTC 3954 / HTE831)).